We begin with the raw amino-acid sequence, 361 residues long: Zinc transporter ZIP13 (361 aa).

The Lumenal segment spans residues 1-6 (MPGCPC). The chain crosses the membrane as a helical span at residues 7-27 (PGCGMAGQRLLFLTVLALELL). Over 28 to 68 (ERAGGSQPALRSLGAAAACRLDSKESESWGALLSGERLDTW) the chain is Cytoplasmic. A helical membrane pass occupies residues 69–89 (ICSLLGSLMVGLSGVFPLLVI). The Lumenal segment spans residues 90-108 (PLEMGTMLQSEAGAWRLKQ). The helical transmembrane segment at 109 to 129 (LLSFALGGLLGNVFLHLLPEA) threads the bilayer. Residues 130–150 (WAYTCNISPGVEGQSLQRQQQ) are Cytoplasmic-facing. A helical transmembrane segment spans residues 151-171 (LGLWVIAGFLTFLALEKMFLN). The Lumenal portion of the chain corresponds to 172-233 (CKEEDPSQAP…TIDNFTHGLA (62 aa)). The chain crosses the membrane as a helical span at residues 234 to 254 (VAASFLVSKKIGLLTTMAILL). Residues 255–260 (HEIPHE) carry the XEXPHE-motif motif. The Cytoplasmic portion of the chain corresponds to 255 to 276 (HEIPHEVGDFAILLRAGFDRWT). The chain crosses the membrane as a helical span at residues 277–297 (AAKLQFSTALGGLLGACFAIC). Topologically, residues 298-307 (TQSPKGVEET) are lumenal. Residues 308-328 (VVWTLPFTSGGFLYVALVNVL) traverse the membrane as a helical segment. Residues 329–340 (PDLLEEDDPWHL) lie on the Cytoplasmic side of the membrane. A helical transmembrane segment spans residues 341–361 (NPPLPTGTPCSRCCCSAPVSW).

This sequence belongs to the ZIP transporter (TC 2.A.5) family. In terms of assembly, homodimer.

It is found in the golgi apparatus membrane. Its subcellular location is the cytoplasmic vesicle membrane. The protein resides in the endoplasmic reticulum membrane. It carries out the reaction Zn(2+)(in) = Zn(2+)(out). Functions as a zinc transporter transporting Zn(2+) from the Golgi apparatus to the cytosol and thus influences the zinc level at least in areas of the cytosol. May regulate beige adipocyte differentiation. This is Zinc transporter ZIP13 from Rattus norvegicus (Rat).